We begin with the raw amino-acid sequence, 575 residues long: MRLLSLLFLLGLATLSFAVRSQWAQQGRATHEALITIRFALTQQNLDVLERTLLDISDTTSKNYGKWKTAEEVTELVAPAREISERVASFLERQGATKVENFRDMVKVTAPVSWIEETLHTNLFFFQHKTRTSKVIIRADGGYKIPAEIAEHVDFVAGLFEFPSIKNARTQVGAGVDGYIVPYVIFDLYGIPTTFPVHPNSSICLVEFQDDQSYNKDDLKKFAKENEITETVVSHTVGPYSGSSADTESTLDVQYGGAIALNTTVWFWTVEDWMYDFATDFLNTKNPPLVVSMSWGWPEPEQCQVGNCTGDETSLEYVVRTNVEFQKIGAIGTTLLAASGDQGAPGDSDPECNSKKKPLSSIFPGASPWVLSVGATMLSNMTTEDADPSAEPPICKSWTCSTSTTELVCTIPQALITTGGGFSDYSLQPSYQNAAVAAYFKSGVPLPPQTDFNASNRGFPDVSALGHNYLIALSGDFEQVDGTSASTPVFAAIIAHLNSYRLNNGKPPLAFAVPLIYQAFASDPTIFNDITTGDNKCTEDCCSKFGYEATKGWDPVTGVGTPVFSKLLAFVQTLP.

Positions 1–18 (MRLLSLLFLLGLATLSFA) are cleaved as a signal peptide. A propeptide spans 19-173 (VRSQWAQQGR…SIKNARTQVG (155 aa)) (removed in mature form). Residues 179-574 (YIVPYVIFDL…SKLLAFVQTL (396 aa)) form the Peptidase S53 domain. An N-linked (GlcNAc...) asparagine glycan is attached at asparagine 200. Residues glutamate 248 and aspartate 252 each act as charge relay system in the active site. Residues asparagine 262, asparagine 307, asparagine 380, and asparagine 453 are each glycosylated (N-linked (GlcNAc...) asparagine). The active-site Charge relay system is serine 484. Ca(2+) contacts are provided by aspartate 529, isoleucine 530, glycine 552, and aspartate 554.

It depends on Ca(2+) as a cofactor. In terms of processing, autocatalytically processed. N-glycosylated.

It carries out the reaction Milk clotting activity. Preferential cleavage of 8-Gly-|-Ser-9 in B chain of insulin most rapidly, followed by 11-Leu-|-Val-12, 19-Cys(SO(3)H)-|-Gly and 24-Phe-|-Phe-25. No action on Ac-Phe-Tyr(I)2.. Inhibited by diisopropylfluorophosphate (DFP) and diazoacetyl-D,L-norleucine methyl ester (DAN). This chain is Physarolisin, found in Physarum polycephalum (Slime mold).